We begin with the raw amino-acid sequence, 156 residues long: Ribosomal RNA large subunit methyltransferase H (156 aa).

S-adenosyl-L-methionine-binding positions include leucine 73, glycine 104, and 123-128; that span reads LSALTL.

This sequence belongs to the RNA methyltransferase RlmH family. In terms of assembly, homodimer.

It localises to the cytoplasm. The catalysed reaction is pseudouridine(1915) in 23S rRNA + S-adenosyl-L-methionine = N(3)-methylpseudouridine(1915) in 23S rRNA + S-adenosyl-L-homocysteine + H(+). In terms of biological role, specifically methylates the pseudouridine at position 1915 (m3Psi1915) in 23S rRNA. In Shewanella oneidensis (strain ATCC 700550 / JCM 31522 / CIP 106686 / LMG 19005 / NCIMB 14063 / MR-1), this protein is Ribosomal RNA large subunit methyltransferase H.